The primary structure comprises 140 residues: Putative pre-16S rRNA nuclease (140 aa).

The protein belongs to the YqgF nuclease family.

The protein localises to the cytoplasm. Its function is as follows. Could be a nuclease involved in processing of the 5'-end of pre-16S rRNA. This is Putative pre-16S rRNA nuclease from Enterococcus faecalis (strain ATCC 700802 / V583).